A 163-amino-acid chain; its full sequence is MKYIAKKCGVRFQPPAMILIYENEAEGKSRQRIMPVRNFSKFSDCTRAAEQLKNNPRHKSYLEQVSLKQLEKLFVFLRGSLQGQSLAETMEQIQRETTIDPEEDLNKLDDKELAKRKSIMDELFEKNQKRKDDPSFVYDVEVEFPQDEQLQSCSWDTASVDEF.

Belongs to the CEP19 family. Interacts with CEP43; this interaction is required for its localization to the mother centriole. Interacts (via residues 121-150) with RABL2B. Interacts (via C-terminus) with CEP350; this interaction is required for its localization to the mother centriole.

It is found in the cytoplasm. The protein localises to the cytoskeleton. It localises to the microtubule organizing center. The protein resides in the centrosome. Its subcellular location is the centriole. It is found in the spindle pole. The protein localises to the cilium basal body. In terms of biological role, required for ciliation. Recruits the RABL2B GTPase to the ciliary base to initiate ciliation. After specifically capturing the activated GTP-bound RABL2B, the CEP19-RABL2B complex binds intraflagellar transport (IFT) complex B from the large pool pre-docked at the base of the cilium and thus triggers its entry into the cilia. Involved in the early steps in cilia formation by recruiting the ciliary vesicles (CVs) to the distal end of the mother centriole where they fuse to initiate cilium assembly. Involved in microtubule (MT) anchoring at centrosomes. This Rattus norvegicus (Rat) protein is Centrosomal protein of 19 kDa (Cep19).